A 1006-amino-acid polypeptide reads, in one-letter code: GATA zinc finger domain-containing protein 7 (1006 aa).

Residues 55–70 (SSSNNFINNHHNNQSS) show a composition bias toward low complexity. 5 disordered regions span residues 55 to 116 (SSSN…APNL), 128 to 248 (PFQN…DPFY), 381 to 499 (NAKK…PLST), 528 to 638 (STSG…SSNS), and 657 to 800 (YNSN…NYHD). Residues 71–86 (DIHSISQSTPNLSTLI) show a composition bias toward polar residues. 2 stretches are compositionally biased toward low complexity: residues 87–110 (SSSS…NSSS) and 128–158 (PFQN…CNNS). Polar residues predominate over residues 159–168 (PVSSSTNYIP). A compositionally biased stretch (low complexity) spans 169-180 (NNSTSNVVLNSS). Residues 181-190 (IPTTSPNVLS) are compositionally biased toward polar residues. 2 stretches are compositionally biased toward low complexity: residues 205-241 (NNNN…NNNN) and 388-410 (TNTN…NNNN). The span at 411-426 (IQQANVNTSPISTSTT) shows a compositional bias: polar residues. Composition is skewed to low complexity over residues 427–456 (PNNN…QQAQ) and 468–496 (SITP…GASP). The span at 528-539 (STSGMLSTTNPY) shows a compositional bias: polar residues. Low complexity predominate over residues 540 to 557 (THHSPNTSSTVSSSVTSP). The segment covering 558–589 (LINQYGTNPTLTNNHSFYGSLASNQNTGASDG) has biased composition (polar residues). Composition is skewed to low complexity over residues 590–601 (NNNNNNNNNNNN) and 619–638 (SSNP…SSNS). A compositionally biased stretch (polar residues) spans 662–680 (GSGMTTPQSLGHSPSHNDY). Composition is skewed to low complexity over residues 681 to 706 (NSNN…NSNN) and 713 to 785 (SNSS…SSNN). The GATA-type zinc finger occupies 842–867 (CHNCGTKNTPEWRRGPSGPATLCNAC). The interval 925–957 (NNASSSSSSSSSSSSSSSSSSSTSSYSSSSYNI) is disordered. Low complexity predominate over residues 928-954 (SSSSSSSSSSSSSSSSSSSTSSYSSSS).

This chain is GATA zinc finger domain-containing protein 7 (gtaG), found in Dictyostelium discoideum (Social amoeba).